We begin with the raw amino-acid sequence, 109 residues long: Spermidine export protein MdtI (109 aa).

4 helical membrane passes run Trp-6–Leu-26, Ile-36–Val-56, Ala-64–Phe-84, and Leu-88–Leu-108.

It belongs to the drug/metabolite transporter (DMT) superfamily. Small multidrug resistance (SMR) (TC 2.A.7.1) family. MdtI subfamily. Forms a complex with MdtJ.

It is found in the cell inner membrane. Functionally, catalyzes the excretion of spermidine. This is Spermidine export protein MdtI from Escherichia coli O139:H28 (strain E24377A / ETEC).